We begin with the raw amino-acid sequence, 1099 residues long: Sodium/potassium/calcium exchanger 1 (1099 aa).

The Extracellular portion of the chain corresponds to 1-452 (MGKLIRMGPQ…DLFSVEERRQ (452 aa)). The span at 123-134 (PTTTKNNYSPTA) shows a compositional bias: polar residues. Disordered stretches follow at residues 123–150 (PTTT…SSRT), 169–199 (TPRG…RVGT), and 284–304 (PRRV…KSNP). The N-linked (GlcNAc...) asparagine glycan is linked to Asn290. A helical transmembrane segment spans residues 453-473 (GWVVLHVFGMMYVFVALAIVC). The Cytoplasmic segment spans residues 474 to 497 (DEYFVPALGVITDKLQISEDVAGA). The stretch at 494–534 (VAGATFMAAGGSAPELFTSLIGVFISHSNVGIGTIVGSAVF) is one Alpha-1 repeat. A helical transmembrane segment spans residues 498-518 (TFMAAGGSAPELFTSLIGVFI). Over 519-522 (SHSN) the chain is Extracellular. The chain crosses the membrane as a helical span at residues 523–543 (VGIGTIVGSAVFNILFVIGTC). Over 544 to 563 (SLFSREILNLTWWPLFRDVS) the chain is Cytoplasmic. A helical membrane pass occupies residues 564–584 (FYILDLIMLILFFLDSLIAWW). Position 585 (Glu585) is a topological domain, extracellular. Residues 586–606 (SLLLLLAYAFYVFTMKWNKHI) form a helical membrane-spanning segment. Residues 607-907 (EVWVKEQLSR…SLDWPETRQK (301 aa)) lie on the Cytoplasmic side of the membrane. A Phosphoserine modification is found at Ser658. The disordered stretch occupies residues 690–901 (EKEEESLNQG…GNEEPLSLDW (212 aa)). Phosphothreonine is present on Thr724. The segment covering 757-769 (PGEEGETAGEGET) has biased composition (acidic residues). 2 stretches are compositionally biased toward basic and acidic residues: residues 813 to 825 (EIHA…KGNE) and 835 to 849 (AENH…KGVE). Over residues 857–892 (GDSEEEEEEEEEQEEEEEEEEQEEEEEEEEEEEEKG) the composition is skewed to acidic residues. The chain crosses the membrane as a helical span at residues 908–928 (QAIYLFLLPIVFPLWLTVPDV). Topologically, residues 929-935 (RRQESRK) are extracellular. The helical transmembrane segment at 936–956 (FFVFTFLGSIMWIAMFSYLMV) threads the bilayer. Residues 957-971 (WWAHQVGETIGISEE) are Cytoplasmic-facing. A helical membrane pass occupies residues 972–992 (IMGLTILAAGTSIPDLITSVI). The stretch at 979-1010 (AAGTSIPDLITSVIVARKGLGDMAVSSSVGSN) is one Alpha-2 repeat. At 993-1010 (VARKGLGDMAVSSSVGSN) the chain is on the extracellular side. The helical transmembrane segment at 1011-1031 (IFDITVGLPVPWLLFSLINGL) threads the bilayer. Residues 1032 to 1039 (QPVPVSSN) are Cytoplasmic-facing. The chain crosses the membrane as a helical span at residues 1040–1060 (GLFCAIVLLFLMLLFVISSIA). Residues 1061 to 1068 (SCKWRMNK) lie on the Extracellular side of the membrane. The helical transmembrane segment at 1069 to 1089 (ILGFTMFLLYFVFLIISVMLE) threads the bilayer. At 1090–1099 (DRIISCPVSV) the chain is on the cytoplasmic side.

Belongs to the Ca(2+):cation antiporter (CaCA) (TC 2.A.19) family. SLC24A subfamily. Post-translationally, the uncleaved signal sequence is required for efficient membrane targeting and proper membrane integration. Expressed in the retina, particularly in the inner segment, outer and inner nuclear layers, and ganglion cell layer.

It is found in the cell membrane. It catalyses the reaction Ca(2+)(out) + K(+)(out) + 4 Na(+)(in) = Ca(2+)(in) + K(+)(in) + 4 Na(+)(out). In terms of biological role, calcium, potassium:sodium antiporter that transports 1 Ca(2+) and 1 K(+) in exchange for 4 Na(+). Critical component of the visual transduction cascade, controlling the calcium concentration of outer segments during light and darkness. Light causes a rapid lowering of cytosolic free calcium in the outer segment of both retinal rod and cone photoreceptors and the light-induced lowering of calcium is caused by extrusion via this protein which plays a key role in the process of light adaptation. This Homo sapiens (Human) protein is Sodium/potassium/calcium exchanger 1.